Reading from the N-terminus, the 222-residue chain is Kinetochore protein Spc25 (222 aa).

The stretch at 51 to 86 forms a coiled coil; the sequence is RHQRKVGKLQKVLMERREELDKRVSFIEELDRELEA.

This sequence belongs to the SPC25 family. As to quaternary structure, component of the Ndc80 complex, which is composed of Ndc80, Nuf2 and Spc25.

The protein resides in the nucleus. Its subcellular location is the chromosome. It localises to the centromere. It is found in the kinetochore. In terms of biological role, acts as a component of the essential kinetochore-associated Ndc80 complex, which is required for chromosome segregation and spindle checkpoint activity during meiosis and mitosis. Required for kinetochore integrity and the organization of stable microtubule binding sites in the outer plate of the kinetochore. Participates in SAC signaling that responds specifically to disruptions in spindle microtubule dynamics. The NDC80 complex synergistically enhances the affinity of the SKA1 complex for microtubules and may allow the NDC80 complex to track depolymerizing microtubules. The sequence is that of Kinetochore protein Spc25 from Drosophila melanogaster (Fruit fly).